We begin with the raw amino-acid sequence, 814 residues long: ATP-dependent 6-phosphofructokinase 1 (814 aa).

Residues 1 to 420 (MDADASTITP…NLETYKLLTK (420 aa)) form an N-terminal catalytic PFK domain 1 region. ATP is bound by residues Gly55, 118 to 119 (RS), and 148 to 151 (GDGS). Asp149 serves as a coordination point for Mg(2+). Residues 194 to 196 (SID), Arg231, 238 to 240 (MGR), Glu294, Arg322, and 328 to 331 (HVQR) each bind substrate. The Proton acceptor role is filled by Asp196. Residues 421-435 (MRTVEKDNLSEGHKF) are interdomain linker. The tract at residues 436–814 (NVAVINVGAP…EEESADSHMF (379 aa)) is C-terminal regulatory PFK domain 2. Beta-D-fructose 2,6-bisphosphate-binding positions include Lys505, 563-567 (TISNN), Arg601, 608-610 (MGG), Glu664, Arg690, 696-699 (HVQQ), and Arg771.

Belongs to the phosphofructokinase type A (PFKA) family. ATP-dependent PFK group I subfamily. Eukaryotic two domain clade 'E' sub-subfamily. In terms of assembly, homotetramer. Mg(2+) serves as cofactor.

It is found in the cytoplasm. The enzyme catalyses beta-D-fructose 6-phosphate + ATP = beta-D-fructose 1,6-bisphosphate + ADP + H(+). Its pathway is carbohydrate degradation; glycolysis; D-glyceraldehyde 3-phosphate and glycerone phosphate from D-glucose: step 3/4. Its activity is regulated as follows. Allosterically activated by ADP, AMP, or fructose 2,6-bisphosphate, and allosterically inhibited by ATP or citrate. In terms of biological role, catalyzes the phosphorylation of D-fructose 6-phosphate to fructose 1,6-bisphosphate by ATP, the first committing step of glycolysis. The polypeptide is ATP-dependent 6-phosphofructokinase 1 (Caenorhabditis elegans).